The following is a 216-amino-acid chain: Probable nicotinate-nucleotide adenylyltransferase (216 aa).

The protein belongs to the NadD family.

The enzyme catalyses nicotinate beta-D-ribonucleotide + ATP + H(+) = deamido-NAD(+) + diphosphate. It participates in cofactor biosynthesis; NAD(+) biosynthesis; deamido-NAD(+) from nicotinate D-ribonucleotide: step 1/1. Functionally, catalyzes the reversible adenylation of nicotinate mononucleotide (NaMN) to nicotinic acid adenine dinucleotide (NaAD). This Shewanella baltica (strain OS195) protein is Probable nicotinate-nucleotide adenylyltransferase.